A 153-amino-acid chain; its full sequence is Large ribosomal subunit protein uL15 (153 aa).

Residues Met-1–Gly-48 form a disordered region.

The protein belongs to the universal ribosomal protein uL15 family. As to quaternary structure, part of the 50S ribosomal subunit.

Functionally, binds to the 23S rRNA. The chain is Large ribosomal subunit protein uL15 from Dehalococcoides mccartyi (strain ATCC BAA-2266 / KCTC 15142 / 195) (Dehalococcoides ethenogenes (strain 195)).